The sequence spans 422 residues: L-threonine dehydratase biosynthetic IlvA (422 aa).

Position 56 is an N6-(pyridoxal phosphate)lysine (lysine 56). Pyridoxal 5'-phosphate contacts are provided by residues asparagine 83, 189-193, and serine 315; that span reads GGGGL. Residues 339 to 413 form the ACT-like domain; the sequence is HYFILNFPQR…FDPSNIYINE (75 aa).

Belongs to the serine/threonine dehydratase family. Homotetramer. It depends on pyridoxal 5'-phosphate as a cofactor.

The catalysed reaction is L-threonine = 2-oxobutanoate + NH4(+). Its pathway is amino-acid biosynthesis; L-isoleucine biosynthesis; 2-oxobutanoate from L-threonine: step 1/1. In terms of biological role, catalyzes the anaerobic formation of alpha-ketobutyrate and ammonia from threonine in a two-step reaction. The first step involved a dehydration of threonine and a production of enamine intermediates (aminocrotonate), which tautomerizes to its imine form (iminobutyrate). Both intermediates are unstable and short-lived. The second step is the nonenzymatic hydrolysis of the enamine/imine intermediates to form 2-ketobutyrate and free ammonia. In the low water environment of the cell, the second step is accelerated by RidA. The protein is L-threonine dehydratase biosynthetic IlvA (ilvA) of Staphylococcus epidermidis (strain ATCC 12228 / FDA PCI 1200).